The following is a 607-amino-acid chain: Dolichyl-diphosphooligosaccharide--protein glycosyltransferase subunit 1 (607 aa).

Residues Met-1 to Ala-24 form the signal peptide. Over Ser-25 to Leu-434 the chain is Lumenal. Residue Lys-187 is modified to N6-acetyllysine. A glycan (N-linked (GlcNAc...) asparagine) is linked at Asn-299. The chain crosses the membrane as a helical span at residues Met-435–Ile-455. Topologically, residues Tyr-456–Leu-607 are cytoplasmic. Lys-538 is subject to N6-acetyllysine; alternate. Lys-538 is covalently cross-linked (Glycyl lysine isopeptide (Lys-Gly) (interchain with G-Cter in SUMO2); alternate).

Belongs to the OST1 family. Component of the oligosaccharyltransferase (OST) complex. OST exists in two different complex forms which contain common core subunits RPN1, RPN2, OST48, OST4, DAD1 and TMEM258, either STT3A or STT3B as catalytic subunits, and form-specific accessory subunits. STT3A complex assembly occurs through the formation of 3 subcomplexes. Subcomplex 1 contains RPN1 and TMEM258, subcomplex 2 contains the STT3A-specific subunits STT3A, DC2/OSTC, and KCP2 as well as the core subunit OST4, and subcomplex 3 contains RPN2, DAD1, and OST48. The STT3A complex can form stable complexes with the Sec61 complex or with both the Sec61 and TRAP complexes. Interacts with TMEM35A/NACHO. In terms of processing, ubiquitinated by the ECS(ASB11) complex. Post-translationally, ufmylated by UFL1 in response to endoplasmic reticulum stress, promoting reticulophagy of endoplasmic reticulum sheets.

Its subcellular location is the endoplasmic reticulum membrane. It functions in the pathway protein modification; protein glycosylation. Its function is as follows. Subunit of the oligosaccharyl transferase (OST) complex that catalyzes the initial transfer of a defined glycan (Glc(3)Man(9)GlcNAc(2) in eukaryotes) from the lipid carrier dolichol-pyrophosphate to an asparagine residue within an Asn-X-Ser/Thr consensus motif in nascent polypeptide chains, the first step in protein N-glycosylation. N-glycosylation occurs cotranslationally and the complex associates with the Sec61 complex at the channel-forming translocon complex that mediates protein translocation across the endoplasmic reticulum (ER). All subunits are required for a maximal enzyme activity. The protein is Dolichyl-diphosphooligosaccharide--protein glycosyltransferase subunit 1 of Canis lupus familiaris (Dog).